The following is a 261-amino-acid chain: Glucose 1-dehydrogenase 1 (261 aa).

11 to 35 serves as a coordination point for NADP(+); that stretch reads VITGSSTGLGKAMAIRFATEKAKVV. Residue Ser145 participates in substrate binding. Catalysis depends on Tyr158, which acts as the Proton acceptor.

This sequence belongs to the short-chain dehydrogenases/reductases (SDR) family. As to quaternary structure, homotetramer.

The catalysed reaction is D-glucose + NAD(+) = D-glucono-1,5-lactone + NADH + H(+). It carries out the reaction D-glucose + NADP(+) = D-glucono-1,5-lactone + NADPH + H(+). Its function is as follows. May play some role in spore germination. This is Glucose 1-dehydrogenase 1 (gdhI) from Priestia megaterium (Bacillus megaterium).